We begin with the raw amino-acid sequence, 347 residues long: 3-methyl-2-oxobutanoate hydroxymethyltransferase 1, mitochondrial (347 aa).

The transit peptide at 1–48 directs the protein to the mitochondrion; it reads MASSLTRNCSRFSKAISVRFMSNLPENTVYGGPKPQNPNQRVTLTHLR. 2 residues coordinate Mg(2+): Asp83 and Asp122. 3-methyl-2-oxobutanoate-binding positions include 83–84, Asp122, and Lys152; that span reads DS. Glu154 contacts Mg(2+). Glu222 (proton acceptor) is an active-site residue.

It belongs to the PanB family. It depends on Mg(2+) as a cofactor.

Its subcellular location is the mitochondrion. The catalysed reaction is 3-methyl-2-oxobutanoate + (6R)-5,10-methylene-5,6,7,8-tetrahydrofolate + H2O = 2-dehydropantoate + (6S)-5,6,7,8-tetrahydrofolate. The protein operates within cofactor biosynthesis; (R)-pantothenate biosynthesis; (R)-pantoate from 3-methyl-2-oxobutanoate: step 1/2. In terms of biological role, catalyzes the reversible reaction in which hydroxymethyl group from 5,10-methylenetetrahydrofolate is transferred onto alpha-ketoisovalerate to form ketopantoate. The polypeptide is 3-methyl-2-oxobutanoate hydroxymethyltransferase 1, mitochondrial (KPHMT1) (Arabidopsis thaliana (Mouse-ear cress)).